We begin with the raw amino-acid sequence, 181 residues long: uncharacterized protein (181 aa).

The protein to M.jannaschii MJ1106.

This is an uncharacterized protein from Methanothermobacter thermautotrophicus (strain ATCC 29096 / DSM 1053 / JCM 10044 / NBRC 100330 / Delta H) (Methanobacterium thermoautotrophicum).